The primary structure comprises 301 residues: Mitochondrial import receptor subunit TOM40 homolog (301 aa).

The segment at 1-20 (MATPTESEFAAPIPQTNPGS) is disordered.

It belongs to the Tom40 family. Forms part of the preprotein translocase complex of the outer mitochondrial membrane (TOM complex). Interacts with mitochondrial targeting sequences.

The protein resides in the mitochondrion outer membrane. Its function is as follows. Channel-forming protein essential for import of protein precursors into mitochondria. Specifically required for nnt-1 accumulation in the mitochondria and may be involved in the secretion of daf-28/insulin from the mitochondria. Required for embryonic and larval development. This chain is Mitochondrial import receptor subunit TOM40 homolog, found in Caenorhabditis briggsae.